The chain runs to 131 residues: MIKLRLKRFGKKREASFRLVACNSTSRRDGRPLQELGFYNPRTKETRLDTEALRLRLSQGAQPTDAVRSLLEKGGLLEKTIRPAELIGKSKQEELRKSEAKTSAKNKKANEEKANEEKVEESETLEASSEA.

Residues 87 to 117 (IGKSKQEELRKSEAKTSAKNKKANEEKANEE) show a composition bias toward basic and acidic residues. Residues 87–131 (IGKSKQEELRKSEAKTSAKNKKANEEKANEEKVEESETLEASSEA) form a disordered region.

The protein belongs to the bacterial ribosomal protein bS16 family.

The chain is Small ribosomal subunit protein bS16 from Prochlorococcus marinus (strain SARG / CCMP1375 / SS120).